Here is a 472-residue protein sequence, read N- to C-terminus: UDP-N-acetylmuramoyl-L-alanyl-D-glutamate--2,6-diaminopimelate ligase (472 aa).

Residue Ser21 coordinates UDP-N-acetyl-alpha-D-muramoyl-L-alanyl-D-glutamate. ATP is bound at residue 99 to 105 (GTNGKTS). UDP-N-acetyl-alpha-D-muramoyl-L-alanyl-D-glutamate contacts are provided by residues 143-144 (TT), Ser170, Gln176, and Arg178. Position 210 is an N6-carboxylysine (Lys210). Meso-2,6-diaminopimelate is bound by residues Arg367, 391–394 (DNPR), Gly440, and Glu444. The Meso-diaminopimelate recognition motif signature appears at 391–394 (DNPR).

The protein belongs to the MurCDEF family. MurE subfamily. Requires Mg(2+) as cofactor. In terms of processing, carboxylation is probably crucial for Mg(2+) binding and, consequently, for the gamma-phosphate positioning of ATP.

The protein resides in the cytoplasm. The catalysed reaction is UDP-N-acetyl-alpha-D-muramoyl-L-alanyl-D-glutamate + meso-2,6-diaminopimelate + ATP = UDP-N-acetyl-alpha-D-muramoyl-L-alanyl-gamma-D-glutamyl-meso-2,6-diaminopimelate + ADP + phosphate + H(+). It participates in cell wall biogenesis; peptidoglycan biosynthesis. Its function is as follows. Catalyzes the addition of meso-diaminopimelic acid to the nucleotide precursor UDP-N-acetylmuramoyl-L-alanyl-D-glutamate (UMAG) in the biosynthesis of bacterial cell-wall peptidoglycan. The chain is UDP-N-acetylmuramoyl-L-alanyl-D-glutamate--2,6-diaminopimelate ligase from Anaplasma marginale (strain St. Maries).